The sequence spans 1194 residues: Protein argonaute 3 (1194 aa).

Over residues 1-98 (MDRGGYRGGR…GRGGGGDRGR (98 aa)) the composition is skewed to basic and acidic residues. Disordered regions lie at residues 1–277 (MDRG…VSQS) and 299–341 (TVLP…DKGG). Low complexity predominate over residues 142-158 (PPSSSQAQVSQGVAPGD). The segment covering 167 to 180 (VGRDGVGDVGRDGV) has biased composition (basic and acidic residues). Over residues 181 to 214 (GDVGQGGVGDVGQVGVGDVGQGGVGDVGQGGVGD) the composition is skewed to gly residues. Residues 215 to 228 (VGRDGVGDVGRDGV) show a composition bias toward basic and acidic residues. Residues 229 to 238 (GDVGRGGVGD) are compositionally biased toward gly residues. Composition is skewed to low complexity over residues 256–277 (QLQQ…VSQS) and 299–316 (TVLP…HTAS). Polar residues predominate over residues 317–326 (GSQVMTPKPS). Over residues 327–341 (SSDKKEPVKRPDKGG) the composition is skewed to basic and acidic residues. The PAZ domain maps to 540–656 (SVIEYLKLYF…VPMEFCNLVE (117 aa)). The 305-residue stretch at 841–1145 (LVLCAMTGKH…AASRGRVYYE (305 aa)) folds into the Piwi domain.

The protein belongs to the argonaute family. Ago subfamily.

Functionally, involved in RNA-mediated post-transcriptional gene silencing (PTGS). Main component of the RNA-induced silencing complex (RISC) that binds to a short guide RNA such as a microRNA (miRNA) or small interfering RNA (siRNA). RISC uses the mature miRNA or siRNA as a guide for slicer-directed cleavage of homologous mRNAs to repress gene expression. This chain is Protein argonaute 3 (AGO3), found in Arabidopsis thaliana (Mouse-ear cress).